The sequence spans 217 residues: Non-structural protein NS3 (217 aa).

It belongs to the orbivirus NS3 family.

In terms of biological role, may play a role in the release of virions from infected cells. The protein is Non-structural protein NS3 (Segment-10) of African horse sickness virus 9 (AHSV-9).